The sequence spans 53 residues: UPF0391 membrane protein msr4317 (53 aa).

The next 2 membrane-spanning stretches (helical) occupy residues 4–24 (WIIILLIVAAAASLLGMPALA) and 33–53 (ILIGIVLVIFLLVVLGIFAVT).

Belongs to the UPF0391 family.

The protein resides in the cell membrane. This Mesorhizobium japonicum (strain LMG 29417 / CECT 9101 / MAFF 303099) (Mesorhizobium loti (strain MAFF 303099)) protein is UPF0391 membrane protein msr4317.